A 193-amino-acid chain; its full sequence is Small ribosomal subunit protein eS1 (193 aa).

Belongs to the eukaryotic ribosomal protein eS1 family.

This is Small ribosomal subunit protein eS1 from Sulfurisphaera tokodaii (strain DSM 16993 / JCM 10545 / NBRC 100140 / 7) (Sulfolobus tokodaii).